We begin with the raw amino-acid sequence, 543 residues long: Ipecac alkaloid beta-glucosidase 2 (543 aa).

Residues Q36, H140, N185–E186, Y350, E422, W471, and F487 each bind a beta-D-glucoside. Residue E186 is the Proton donor of the active site. The Nucleophile role is filled by E422.

The protein belongs to the glycosyl hydrolase 1 family.

Its subcellular location is the cytoplasm. The protein localises to the cytosol. It catalyses the reaction deacetylipecoside + H2O = deacetylipecoside aglycone + D-glucose. It carries out the reaction deacetylisoipecoside + H2O = deacetylisoipecoside aglycone + D-glucose. It functions in the pathway alkaloid biosynthesis. Functionally, beta-glucosidase catalyzing deglucosylation on N-deacetylisoipecoside and N-deacetylipecoside. The sequence is that of Ipecac alkaloid beta-glucosidase 2 from Carapichea ipecacuanha (Ipecac).